Reading from the N-terminus, the 303-residue chain is Cathepsin B-like CP1 (303 aa).

The signal sequence occupies residues 1-19 (MALSLLLAVVCAKPLVSRA). The N-linked (GlcNAc...) asparagine glycan is linked to Asn-41. Cystine bridges form between Cys-92–Cys-119, Cys-102–Cys-145, and Cys-138–Cys-181. Cys-105 is an active-site residue. Catalysis depends on residues His-249 and Asn-270.

Belongs to the peptidase C1 family.

It is found in the vacuole. Thiol protease which is required for parasite excystation and invasion of the proximal small intestine of the human host. The sequence is that of Cathepsin B-like CP1 (CP1) from Giardia intestinalis (Giardia lamblia).